Consider the following 327-residue polypeptide: Thioredoxin reductase (327 aa).

Residues 10–13 (SGPA), 39–40 (IA), Gln-44, Asn-53, Val-86, Cys-143, Asp-286, and 293–295 (RQA) each bind FAD. Residues Cys-140 and Cys-143 are joined by a disulfide bond.

Belongs to the class-II pyridine nucleotide-disulfide oxidoreductase family. In terms of assembly, homodimer. FAD is required as a cofactor.

It is found in the cytoplasm. It catalyses the reaction [thioredoxin]-dithiol + NADP(+) = [thioredoxin]-disulfide + NADPH + H(+). Functionally, component of the thioredoxin-thioredoxin reductase system which may be involved in biosynthesis of penicillins and cephalosporins and may be important in determining the thiol-disulfide redox balance. This chain is Thioredoxin reductase (TRR1), found in Pneumocystis jirovecii (Human pneumocystis pneumonia agent).